A 289-amino-acid chain; its full sequence is Serine/threonine-protein phosphatase Pgam5, mitochondrial (289 aa).

The chain crosses the membrane as a helical span at residues Phe7 to Leu23.

The protein belongs to the phosphoglycerate mutase family. BPG-dependent PGAM subfamily. Interacts with Pk92B/ASK1.

Its subcellular location is the mitochondrion outer membrane. It catalyses the reaction O-phospho-L-seryl-[protein] + H2O = L-seryl-[protein] + phosphate. It carries out the reaction O-phospho-L-threonyl-[protein] + H2O = L-threonyl-[protein] + phosphate. Displays phosphatase activity for serine/threonine residues, and dephosphorylates and activates Pk92B kinase. Has apparently no phosphoglycerate mutase activity. This is Serine/threonine-protein phosphatase Pgam5, mitochondrial from Drosophila persimilis (Fruit fly).